The chain runs to 290 residues: Eukaryotic translation initiation factor 3 subunit G (290 aa).

Disordered stretches follow at residues 1-35 (MSRL…DGTK) and 157-200 (ESTG…GERM). The 79-residue stretch at 210–288 (ATLRVTNVSE…LILRVEFAKR (79 aa)) folds into the RRM domain.

This sequence belongs to the eIF-3 subunit G family. Component of the eukaryotic translation initiation factor 3 (eIF-3) complex.

The protein localises to the cytoplasm. In terms of biological role, RNA-binding component of the eukaryotic translation initiation factor 3 (eIF-3) complex, which is involved in protein synthesis of a specialized repertoire of mRNAs and, together with other initiation factors, stimulates binding of mRNA and methionyl-tRNAi to the 40S ribosome. The eIF-3 complex specifically targets and initiates translation of a subset of mRNAs involved in cell proliferation. This subunit can bind 18S rRNA. The polypeptide is Eukaryotic translation initiation factor 3 subunit G (tif35) (Aspergillus clavatus (strain ATCC 1007 / CBS 513.65 / DSM 816 / NCTC 3887 / NRRL 1 / QM 1276 / 107)).